The chain runs to 589 residues: Enhancer of polycomb-like protein 1 (589 aa).

Disordered regions lie at residues 298–339 (GDED…RPAE), 403–430 (MTPP…PNPP), 468–497 (LPSP…DAPV), and 516–589 (LQTV…QPVS). The span at 474-487 (DLSEEQSDRWKYDQ) shows a compositional bias: basic and acidic residues. The segment covering 557 to 566 (PQPNQSQSLP) has biased composition (low complexity). Positions 567–589 (LPQPQQPVAQPQPQPQPQAQPVS) are enriched in pro residues.

This sequence belongs to the enhancer of polycomb family. In terms of assembly, component of the NuA4 histone acetyltransferase complex.

It is found in the nucleus. In terms of biological role, component of the NuA4 histone acetyltransferase complex which is involved in transcriptional activation of selected genes principally by acetylation of nucleosomal histone H4 and H2A. The NuA4 complex is also involved in DNA repair. Involved in gene silencing by neighboring heterochromatin, blockage of the silencing spreading along the chromosome, and required for cell cycle progression through G2/M. This Neurospora crassa (strain ATCC 24698 / 74-OR23-1A / CBS 708.71 / DSM 1257 / FGSC 987) protein is Enhancer of polycomb-like protein 1 (epl-1).